The sequence spans 476 residues: PRAME family member 6 (476 aa).

The stretch at 97 to 124 (RWKLQVLDLQDVCENFWMVWSEAMARGC) is one LRR 1; degenerate repeat. An LRR 2; degenerate repeat occupies 179-203 (HLCCKKLKILGMPFRNIRSILKMVN). The LRR 3; degenerate repeat unit spans residues 204-230 (LDCIQEVEVNCKWVLPILTQFTPYLGH). An LRR 4; degenerate repeat occupies 231–266 (MRNLQKLVLSHMDVSRYVSPEQKKEIVTQFTTQFLK). LRR repeat units follow at residues 267-292 (LCCLQKLSMNSVSFLEGHLDQLLSCL), 293-324 (KTSLKVLTITNCVLLESDLKHLSQCPSISQLK), 325-345 (TLDLSGIRLTNYSLVPLQILL), 349-376 (AATLEYLDLDDCGIIDSQVNAILPALSR), and 377-401 (CFELNTFSFCGNPISMATLENLLSH).

Belongs to the PRAME family. Component of a CRL2 E3 ubiquitin-protein ligase complex, also named ECS (Elongin BC-CUL2/5-SOCS-box protein) complex, composed of CUL2, Elongin BC (ELOB and ELOC), RBX1 and substrate-specific adapter PRAMEF6.

It participates in protein modification; protein ubiquitination. Its function is as follows. Substrate-recognition component of a Cul2-RING (CRL2) E3 ubiquitin-protein ligase complex, which mediates ubiquitination of target proteins, leading to their degradation. The CRL2(PRAMEF6) complex mediates ubiquitination and degradation of truncated MSRB1/SEPX1 selenoproteins produced by failed UGA/Sec decoding. The protein is PRAME family member 6 of Homo sapiens (Human).